The primary structure comprises 1093 residues: TATA element modulatory factor (1093 aa).

Disordered stretches follow at residues 38–80 (WAET…SPKA) and 108–189 (TIQK…DMKV). A compositionally biased stretch (polar residues) spans 51–70 (SPVSGGWDTSTWGLKSNTEP). A phosphoserine mark is found at Ser72, Ser77, Ser112, and Ser136. Residues 123 to 137 (QRPEEEVKSSLHESL) show a composition bias toward basic and acidic residues. The span at 139 to 158 (IGQSRTPETTESQVKDSSLC) shows a compositional bias: polar residues. Over residues 173 to 187 (TEGKHEETVNKESDM) the composition is skewed to basic and acidic residues. 2 positions are modified to phosphoserine: Ser199 and Ser217. Residues 229–238 (PKEQKHEDRQ) are compositionally biased toward basic and acidic residues. Disordered regions lie at residues 229-260 (PKEQ…SDIE) and 266-285 (SVIS…SKSS). A compositionally biased stretch (low complexity) spans 246-257 (VSTFSSGTSTTS). Phosphoserine is present on residues Ser328, Ser330, Ser333, Ser338, Ser344, Ser413, Ser542, Ser925, and Ser928. The segment at 333–342 (SLDSRSVSEI) is interaction with Elongin BC complex. Residues 439–922 (EALSEKEDVC…QETIKEKERK (484 aa)) adopt a coiled-coil conformation. The tract at residues 919 to 939 (KERKPFSVSSTPTMSRSSSIS) is disordered. The span at 925–939 (SVSSTPTMSRSSSIS) shows a compositional bias: low complexity. Thr929 carries the phosphothreonine modification. Ser933 carries the post-translational modification Phosphoserine. The stretch at 984–1092 (SIIENLQSQL…QIDELLRQSL (109 aa)) forms a coiled coil.

In terms of assembly, interacts with TRNP1; may regulate TRNP1 proteasomal degradation. Component of the SNF/SWI transcription factor complexes. Interacts with RAB6A. Interacts with STAT3 and FER. Interacts with TCEB1. Post-translationally, phosphorylated by FER.

Its subcellular location is the cytoplasm. It is found in the nucleus. It localises to the golgi apparatus membrane. In terms of biological role, potential coactivator of the androgen receptor. Mediates STAT3 degradation. May play critical roles in two RAB6-dependent retrograde transport processes: one from endosomes to the Golgi and the other from the Golgi to the ER. This protein binds the HIV-1 TATA element and inhibits transcriptional activation by the TATA-binding protein (TBP). The protein is TATA element modulatory factor (TMF1) of Homo sapiens (Human).